The sequence spans 472 residues: Keratin, type I cytoskeletal 14 (472 aa).

Positions 1–114 are head; sequence MTTCSRQFTS…AGGDGLLVGS (114 aa). The coil 1A stretch occupies residues 115 to 150; it reads EKVTMQNLNDRLASYLDKVRALEEANADLEVKIRDW. An IF rod domain is found at 115 to 426; the sequence is EKVTMQNLND…RLLEGEDAHL (312 aa). The segment at 151–168 is linker 1; that stretch reads YQRQRPAEIKDYSPYFKT. Residues 169-260 form a coil 1B region; the sequence is IEDLRNKILT…KNHEEEMNAL (92 aa). The tract at residues 261–283 is linker 12; the sequence is RGQVGGDVNVEMDAAPGVDLSRI. The tract at residues 284-422 is coil 2; that stretch reads LNEMRDQYEK…ATYRRLLEGE (139 aa). The tail stretch occupies residues 423 to 472; sequence DAHLSSSQFSSGSQSSRDVTSSSRQIRTKVMDVHDGKVVSTHEQVLRTKN. The tract at residues 425–472 is interaction with Type I keratins and keratin filaments; that stretch reads HLSSSQFSSGSQSSRDVTSSSRQIRTKVMDVHDGKVVSTHEQVLRTKN. The disordered stretch occupies residues 426 to 472; it reads LSSSQFSSGSQSSRDVTSSSRQIRTKVMDVHDGKVVSTHEQVLRTKN. Residues 427–445 show a composition bias toward low complexity; sequence SSSQFSSGSQSSRDVTSSS. Ser435 carries the post-translational modification Phosphoserine.

The protein belongs to the intermediate filament family. Heterotetramer of two type I and two type II keratins. Forms a disulfide-linked heterodimer (via 2B domains) with KRT5 (via 2B domains). Forms a heterodimer with KRT1; the interaction is more abundant in the absence of KRT5. Interacts with PLEC isoform 1C, when in a heterodimer with KRT5. Interacts with TRADD and with keratin filaments. Associates with other type I keratins. Interacts with EPPK1. Interacts with KLHL24. Interacts with PKP1 (via N-terminus) and PKP2. Post-translationally, a disulfide bond is formed between rather than within filaments and promotes the formation of a keratin filament cage around the nucleus. Ubiquitinated by the BCR(KLHL24) E3 ubiquitin ligase complex. Expressed in the corneal epithelium (at protein level). Detected in the basal layer, lowered within the more apically located layers specifically in the stratum spinosum, stratum granulosum but is not detected in stratum corneum. Strongly expressed in the outer root sheath of anagen follicles but not in the germinative matrix, inner root sheath or hair. Found in keratinocytes surrounding the club hair during telogen.

The protein localises to the cytoplasm. The protein resides in the nucleus. The nonhelical tail domain is involved in promoting KRT5-KRT14 filaments to self-organize into large bundles and enhances the mechanical properties involved in resilience of keratin intermediate filaments in vitro. In Homo sapiens (Human), this protein is Keratin, type I cytoskeletal 14 (KRT14).